Reading from the N-terminus, the 371-residue chain is Cytochrome b (371 aa).

Transmembrane regions (helical) follow at residues 25 to 45, 69 to 90, 105 to 125, and 170 to 190; these read FGSM…FLAI, WIMQ…YIHI, WLSG…GYVL, and FFAL…IHII. Residues H75 and H89 each contribute to the heme b site. Heme b contacts are provided by H174 and H188. H193 contacts a ubiquinone. The next 4 helical transmembrane spans lie at 218–238, 280–300, 312–332, and 339–358; these read YKDL…LSFS, LGGT…PFTH, LSQT…WTAT, and FITI…IMNP.

It belongs to the cytochrome b family. In terms of assembly, the cytochrome bc1 complex contains 3 respiratory subunits (MT-CYB, CYC1 and UQCRFS1), 2 core proteins (UQCRC1 and UQCRC2) and probably 6 low-molecular weight proteins. Heme b serves as cofactor.

It localises to the mitochondrion inner membrane. Functionally, component of the ubiquinol-cytochrome c reductase complex (complex III or cytochrome b-c1 complex) that is part of the mitochondrial respiratory chain. The b-c1 complex mediates electron transfer from ubiquinol to cytochrome c. Contributes to the generation of a proton gradient across the mitochondrial membrane that is then used for ATP synthesis. This chain is Cytochrome b (MT-CYB), found in Micrurus fulvius (Eastern coral snake).